Here is a 390-residue protein sequence, read N- to C-terminus: Protein NDRG4-A (390 aa).

Positions leucine 356 to cysteine 390 are disordered. The span at cysteine 370–cysteine 390 shows a compositional bias: polar residues.

The protein belongs to the NDRG family.

It is found in the cytoplasm. The protein localises to the cytosol. Its function is as follows. Contributes to the maintenance of intracerebral BDNF levels within the normal range. May enhance growth factor-induced ERK1 and ERK2 phosphorylation. May attenuate growth factor-promoted ELK1 phosphorylation in a microtubule-dependent manner. The chain is Protein NDRG4-A (ndrg4-a) from Xenopus laevis (African clawed frog).